Here is a 98-residue protein sequence, read N- to C-terminus: MRYTTSFIGLCFLIFLLKNLVNGGLIRECDYTMEGYGPCGPNGRSLCLDTFWKTPPSPGLSKNLEGCRCEDRGKRPPIFTGLSHTCRCCWSYGGGSDD.

The first 23 residues, 1–23, serve as a signal peptide directing secretion; it reads MRYTTSFIGLCFLIFLLKNLVNG. Cystine bridges form between C29–C89, C39–C69, C47–C86, and C67–C88.

Belongs to the DEFL family.

It localises to the secreted. The sequence is that of Putative defensin-like protein 239 (SCRL17) from Arabidopsis thaliana (Mouse-ear cress).